The sequence spans 158 residues: Transcription elongation factor GreA (158 aa).

Positions 46–66 (AEYEAAKERQGFIEGRISELE) form a coiled coil.

The protein belongs to the GreA/GreB family.

Necessary for efficient RNA polymerase transcription elongation past template-encoded arresting sites. The arresting sites in DNA have the property of trapping a certain fraction of elongating RNA polymerases that pass through, resulting in locked ternary complexes. Cleavage of the nascent transcript by cleavage factors such as GreA or GreB allows the resumption of elongation from the new 3'terminus. GreA releases sequences of 2 to 3 nucleotides. This Neisseria meningitidis serogroup A / serotype 4A (strain DSM 15465 / Z2491) protein is Transcription elongation factor GreA.